The sequence spans 359 residues: Dihydroorotate dehydrogenase (quinone) (359 aa).

Residues 68–72 (AGFDK) and threonine 92 contribute to the FMN site. Substrate is bound at residue lysine 72. Position 117 to 121 (117 to 121 (NRMGF)) interacts with substrate. Residues asparagine 145 and asparagine 176 each coordinate FMN. Substrate is bound at residue asparagine 176. Catalysis depends on serine 179, which acts as the Nucleophile. Substrate is bound at residue asparagine 181. FMN is bound by residues lysine 212 and threonine 240. Substrate is bound at residue 241-242 (NT). FMN contacts are provided by residues glycine 266, glycine 295, and 316-317 (YT).

It belongs to the dihydroorotate dehydrogenase family. Type 2 subfamily. As to quaternary structure, monomer. Requires FMN as cofactor.

Its subcellular location is the cell membrane. It carries out the reaction (S)-dihydroorotate + a quinone = orotate + a quinol. It participates in pyrimidine metabolism; UMP biosynthesis via de novo pathway; orotate from (S)-dihydroorotate (quinone route): step 1/1. Functionally, catalyzes the conversion of dihydroorotate to orotate with quinone as electron acceptor. In Corynebacterium striatum, this protein is Dihydroorotate dehydrogenase (quinone).